Consider the following 217-residue polypeptide: Ribonuclease HII (217 aa).

The region spanning 27-216 (RTIAGIDEAG…VREHLGESRC (190 aa)) is the RNase H type-2 domain. Positions 33, 34, and 125 each coordinate a divalent metal cation.

It belongs to the RNase HII family. Mn(2+) is required as a cofactor. It depends on Mg(2+) as a cofactor.

It localises to the cytoplasm. The enzyme catalyses Endonucleolytic cleavage to 5'-phosphomonoester.. Functionally, endonuclease that specifically degrades the RNA of RNA-DNA hybrids. This is Ribonuclease HII from Geobacter sulfurreducens (strain ATCC 51573 / DSM 12127 / PCA).